Here is a 425-residue protein sequence, read N- to C-terminus: MSRASSGTATGARLFGISSVLGEYRVLIGDEGAGPSRSPSEVSFSVWYRSRAARLVIVCLVASFLVPCLTFLIAETVMGQTITTPLSLTLDHWSEVRARAHNQGVEVRKKKWITLCEAEWVMMNVGWPREGTFSLDNISQVEKKIFAPGPYGHPDQVPYITTWRSLATDPPSWVRPFLPPPKPPTSLPQPLSPQPSAPLTSSLYPVLPKSDPPKPPVLPPDPSSPLIDLLTEEPPPYPGGHGPPPSGPRTPTASPIASRLRERRENPAEESQALPLREGPNNRPQYWPFSASDLYNWKSHNPPFSQDPVALTNLIESILVTHQPTWDDCQQLLQALLTGEERQRVLLEARKQVPGEDGRPTQLPNVIDETFPLTRPNWDFATPAGREHLRLYRQLLLAGLRGAARRPTNLAQVKQVVQGKEETPA.

Topologically, residues 1–54 are cytoplasmic; the sequence is MSRASSGTATGARLFGISSVLGEYRVLIGDEGAGPSRSPSEVSFSVWYRSRAAR. A helical membrane pass occupies residues 55-75; sequence LVIVCLVASFLVPCLTFLIAE. Over 76–425 the chain is Extracellular; it reads TVMGQTITTP…VVQGKEETPA (350 aa). Asparagine 137 is a glycosylation site (N-linked (GlcNAc...) asparagine; by host). Residues 174-285 form a disordered region; it reads VRPFLPPPKP…LREGPNNRPQ (112 aa). Residues 177-196 are compositionally biased toward pro residues; the sequence is FLPPPKPPTSLPQPLSPQPS. Low complexity predominate over residues 197 to 209; it reads APLTSSLYPVLPK. Pro residues-rich tracts occupy residues 213-223 and 233-248; these read PKPPVLPPDPS and EPPP…PSGP.

Glycosylated by host. In terms of processing, cleaved by host near the middle of the molecule, releasing the c-terminal half containing capsid and nucleoprotein domains op GAG.

It is found in the host cell membrane. In terms of biological role, plays a role in viral particle release. Presumably acts by facilitating the fission of the virion bud at the cell surface. This chain is Glyco-Gag protein, found in Felidae (cat family).